Consider the following 84-residue polypeptide: Phosphoribosylformylglycinamidine synthase subunit PurS (84 aa).

This sequence belongs to the PurS family. As to quaternary structure, homodimer or homotetramer. Part of the FGAM synthase complex composed of 1 PurL, 1 PurQ and 2 PurS subunits.

It is found in the cytoplasm. It carries out the reaction N(2)-formyl-N(1)-(5-phospho-beta-D-ribosyl)glycinamide + L-glutamine + ATP + H2O = 2-formamido-N(1)-(5-O-phospho-beta-D-ribosyl)acetamidine + L-glutamate + ADP + phosphate + H(+). It participates in purine metabolism; IMP biosynthesis via de novo pathway; 5-amino-1-(5-phospho-D-ribosyl)imidazole from N(2)-formyl-N(1)-(5-phospho-D-ribosyl)glycinamide: step 1/2. Functionally, part of the phosphoribosylformylglycinamidine synthase complex involved in the purines biosynthetic pathway. Catalyzes the ATP-dependent conversion of formylglycinamide ribonucleotide (FGAR) and glutamine to yield formylglycinamidine ribonucleotide (FGAM) and glutamate. The FGAM synthase complex is composed of three subunits. PurQ produces an ammonia molecule by converting glutamine to glutamate. PurL transfers the ammonia molecule to FGAR to form FGAM in an ATP-dependent manner. PurS interacts with PurQ and PurL and is thought to assist in the transfer of the ammonia molecule from PurQ to PurL. This Bacillus subtilis (strain 168) protein is Phosphoribosylformylglycinamidine synthase subunit PurS.